A 336-amino-acid chain; its full sequence is Casein kinase II subunit alpha (336 aa).

The Protein kinase domain occupies 37-322 (YQLVRKLGRG…AREAMAHPYF (286 aa)). Residues 43–51 (LGRGKYSEV) and lysine 66 each bind ATP. Aspartate 154 serves as the catalytic Proton acceptor.

The protein belongs to the protein kinase superfamily. Ser/Thr protein kinase family. CK2 subfamily. As to quaternary structure, tetramer of two alpha and two beta chains. It depends on Mg(2+) as a cofactor.

The protein localises to the nucleus. Its subcellular location is the nucleolus. The enzyme catalyses L-seryl-[protein] + ATP = O-phospho-L-seryl-[protein] + ADP + H(+). It carries out the reaction L-threonyl-[protein] + ATP = O-phospho-L-threonyl-[protein] + ADP + H(+). In terms of biological role, casein kinases are operationally defined by their preferential utilization of acidic proteins such as caseins as substrates. The alpha chain contains the catalytic site. May participate in Wnt signaling. This Drosophila melanogaster (Fruit fly) protein is Casein kinase II subunit alpha (CkIIalpha).